A 139-amino-acid polypeptide reads, in one-letter code: MATSFCSSISMQAPFSATTTRFCLNKQATIFNNEKTNNLSFSLRRLMPARLAVSCAVKQETVEKVSEIVKKQLSLTDDQKVTAGTKFTELGADSLDTVEIVMGLEEEFGITMAEERAKEIATVQQAAELIEELVQEKTA.

A chloroplast-targeting transit peptide spans 1–54 (MATSFCSSISMQAPFSATTTRFCLNKQATIFNNEKTNNLSFSLRRLMPARLAVS). One can recognise a Carrier domain in the interval 59-134 (QETVEKVSEI…QAAELIEELV (76 aa)). Position 94 is an O-(pantetheine 4'-phosphoryl)serine (Ser94).

The protein belongs to the acyl carrier protein (ACP) family. In terms of processing, 4'-phosphopantetheine is transferred from CoA to a specific serine of apo-ACP by acpS. This modification is essential for activity because fatty acids are bound in thioester linkage to the sulfhydryl of the prosthetic group.

Its subcellular location is the plastid. It localises to the chloroplast. Its function is as follows. Carrier of the growing fatty acid chain in fatty acid biosynthesis. The protein is Acyl carrier protein 5, chloroplastic (ACP5) of Arabidopsis thaliana (Mouse-ear cress).